The chain runs to 419 residues: Cell division protein FtsZ (419 aa).

GTP contacts are provided by residues 22-26, 109-111, Glu140, Arg144, and Asp188; these read GGGGN and GSG. The interval 397–419 is disordered; sequence ERFEAPISQDEDELDTPPFFKNR.

This sequence belongs to the FtsZ family. In terms of assembly, homodimer. Polymerizes to form a dynamic ring structure in a strictly GTP-dependent manner. Interacts directly with several other division proteins. Interacts with CcrZ; the interaction is direct.

It localises to the cytoplasm. Functionally, essential cell division protein that forms a contractile ring structure (Z ring) at the future cell division site. The regulation of the ring assembly controls the timing and the location of cell division. One of the functions of the FtsZ ring is to recruit other cell division proteins to the septum to produce a new cell wall between the dividing cells. Binds GTP and shows GTPase activity. The polypeptide is Cell division protein FtsZ (Streptococcus pneumoniae serotype 2 (strain D39 / NCTC 7466)).